The sequence spans 607 residues: Elongation factor 4 (607 aa).

Residues 11 to 193 (EKIRNFSIIA…QIVEKVPAPQ (183 aa)) enclose the tr-type G domain. GTP contacts are provided by residues 23–28 (DHGKST) and 140–143 (NKID).

This sequence belongs to the TRAFAC class translation factor GTPase superfamily. Classic translation factor GTPase family. LepA subfamily.

The protein resides in the cell membrane. The enzyme catalyses GTP + H2O = GDP + phosphate + H(+). In terms of biological role, required for accurate and efficient protein synthesis under certain stress conditions. May act as a fidelity factor of the translation reaction, by catalyzing a one-codon backward translocation of tRNAs on improperly translocated ribosomes. Back-translocation proceeds from a post-translocation (POST) complex to a pre-translocation (PRE) complex, thus giving elongation factor G a second chance to translocate the tRNAs correctly. Binds to ribosomes in a GTP-dependent manner. In Lactococcus lactis subsp. lactis (strain IL1403) (Streptococcus lactis), this protein is Elongation factor 4.